The chain runs to 160 residues: Eosinophil cationic protein (160 aa).

A signal peptide spans 1-27; that stretch reads MVPKLFTPQICLLLLLGLMGVEGSLHA. The segment at 28–72 is required for nearly all of the bactericidal activities; partially involved in LPS-binding; the sequence is RPPQFTKAQWFAIQHINVNPPRCTIAMRVINNYQRRCKNQNTFLR. Residue H42 is the Proton acceptor of the active site. Disulfide bonds link C50–C110, C64–C123, C82–C138, and C89–C98. Y60 is modified (3'-nitrotyrosine). 65 to 69 serves as a coordination point for substrate; the sequence is KNQNT. N84, N92, and N119 each carry an N-linked (GlcNAc...) asparagine glycan. Catalysis depends on H155, which acts as the Proton donor.

The protein belongs to the pancreatic ribonuclease family. Interacts with bacterial lipopolysaccharide (LPS) and lipoteichoic acid (LTA). In vitro interacts with phospholipid bilayers.

It localises to the secreted. Functionally, cytotoxin and helminthotoxin with low-efficiency ribonuclease activity. Possesses a wide variety of biological activities. Exhibits antibacterial activity. The sequence is that of Eosinophil cationic protein (RNASE3) from Macaca nemestrina (Pig-tailed macaque).